We begin with the raw amino-acid sequence, 790 residues long: Transient receptor potential cation channel subfamily V member 3 (790 aa).

Residues 1 to 430 (MKAHPKEMVP…TLEPLHTLLH (430 aa)) are Cytoplasmic-facing. Disordered regions lie at residues 15–34 (RVAAPSGNPAILPEKRPAEI), 52–71 (PNPTVAKTSPPVFSKPMDSN), and 76–112 (ISGNCDDMDSPQSPQDDVTETPSNPNSPSAQLAKEEQ). A compositionally biased stretch (polar residues) spans 95-105 (ETPSNPNSPSA). ANK repeat units follow at residues 117 to 148 (RRLKKRIFAAVSEGCVEELVELLVELQELCRR), 170 to 198 (TCLMKALLNINPNTKEIVRILLAFAEEND), 214 to 243 (EGQTALNIAIERRQGDIAALLIAAGADVNA), 261 to 291 (FGETPLALAACTNQPEIVQLLMEHEQTDITS), 298 to 330 (NILHALVTVAEDFKTQNDFVKRMYDMILLRSGN), 340 to 362 (DGLTPLQLAAKMGKAEILKYILS), and 398 to 420 (TTDNSVLEITVYNTNIDNRHEML). A helical transmembrane segment spans residues 431-460 (MKWKKFAKHMFFLSFCFYFFYNITLTLVSY). At 461–479 (YRPREEEAIPHPLALTHKM) the chain is on the extracellular side. A helical membrane pass occupies residues 480 to 508 (GWLQLLGRMFVLIWAMCISVKEGIAIFLL). The Cytoplasmic portion of the chain corresponds to 509-519 (RPSDLQSILSD). The helical transmembrane segment at 520–540 (AWFHFVFFIQAVLVILSVFLY) threads the bilayer. The Extracellular portion of the chain corresponds to 541–545 (LFAYK). The chain crosses the membrane as a helical span at residues 546–566 (EYLACLVLAMALGWANMLYYT). The Cytoplasmic portion of the chain corresponds to 567–569 (RGF). A helical transmembrane segment spans residues 570-608 (QSMGMYSVMIQKVILHDVLKFLFVYIVFLLGFGVALASL). Residues 609–620 (IEKCPKDNKDCS) are Extracellular-facing. The segment at residues 621–646 (SYGSFSDAVLELFKLTIGLGDLNIQQ) is an intramembrane region (pore-forming). Glycine 638 lines the Na(+) pocket. Residues 647–649 (NSK) are Extracellular-facing. Residues 650–686 (YPILFLFLLITYVILTFVLLLNMLIALMGETVENVSK) form a helical membrane-spanning segment. Residues 687 to 790 (ESERIWRLQR…EVEEFPETSV (104 aa)) are Cytoplasmic-facing.

The protein belongs to the transient receptor (TC 1.A.4) family. TrpV subfamily. TRPV3 sub-subfamily. Homotetramer. May convert from a homotetramer to a homopentamer to allow pore dilation. Interacts with TRPV1; may form a heteromeric channel with TRPV1. Interacts with SNX11; this interaction promotes TRPV3 trafficking from the cell membrane to lysosome for degradation. Abundantly expressed in CNS. Widely expressed at low levels. Detected in dorsal root ganglion (at protein level). Expressed in the keratinocyte layers of the outer root sheath and, to lesser extent, to the matrix of the hair follicles (at protein level).

It is found in the cell membrane. The protein resides in the cytoplasm. It localises to the lysosome. It catalyses the reaction Ca(2+)(in) = Ca(2+)(out). The catalysed reaction is Mg(2+)(in) = Mg(2+)(out). The enzyme catalyses Na(+)(in) = Na(+)(out). It carries out the reaction K(+)(in) = K(+)(out). Its activity is regulated as follows. Activated by cannabinoid that binds to the vanilloid binding pocket. Diphenylboronic anhydride induces pore dilation and enhances cation permeability by promoting the conversion to a homopentamer. Non-selective calcium permeant cation channel. It is activated by innocuous (warm) temperatures and shows an increased response at noxious temperatures greater than 39 degrees Celsius. Activation exhibits an outward rectification. The channel pore can dilate to provide permeability to larger cations. May associate with TRPV1 and may modulate its activity. Is a negative regulator of hair growth and cycling: TRPV3-coupled signaling suppresses keratinocyte proliferation in hair follicles and induces apoptosis and premature hair follicle regression (catagen). The sequence is that of Transient receptor potential cation channel subfamily V member 3 (TRPV3) from Homo sapiens (Human).